Consider the following 56-residue polypeptide: Large ribosomal subunit protein bL32 (56 aa).

Residues 1–56 form a disordered region; the sequence is MAVPARRTSKAKKNKRRTHKGLTTPGLSRDSETGEYRMSHRISPDGTYKGRTIIEK. A compositionally biased stretch (basic residues) spans 7-20; sequence RTSKAKKNKRRTHK. The segment covering 29–38 has biased composition (basic and acidic residues); it reads RDSETGEYRM.

This sequence belongs to the bacterial ribosomal protein bL32 family.

The protein is Large ribosomal subunit protein bL32 of Listeria monocytogenes serotype 4a (strain HCC23).